The following is a 202-amino-acid chain: Ras-related protein RABD2c (202 aa).

GTP contacts are provided by residues 15–23 (GDSGVGKSC), 33–40 (YLDSYIST), 63–67 (DTAGQ), 121–124 (NKCD), and 151–153 (SAK). The short motif at 37–45 (YISTIGVDF) is the Effector region element. The disordered stretch occupies residues 174 to 202 (ASQPAGGSKPPTVQIRGQPVNQQSGCCSS). A compositionally biased stretch (polar residues) spans 192–202 (PVNQQSGCCSS). 2 S-geranylgeranyl cysteine lipidation sites follow: Cys-199 and Cys-200.

Belongs to the small GTPase superfamily. Rab family.

The protein resides in the cell membrane. It localises to the golgi apparatus. The protein localises to the trans-Golgi network membrane. Its subcellular location is the golgi apparatus membrane. Functionally, protein transport. Regulator of membrane traffic from the Golgi apparatus towards the endoplasmic reticulum (ER). The chain is Ras-related protein RABD2c (RABD2C) from Arabidopsis thaliana (Mouse-ear cress).